We begin with the raw amino-acid sequence, 234 residues long: NLP effector protein 10 (234 aa).

A signal peptide spans Met-1–Ala-17. Asn-65 carries an N-linked (GlcNAc...) asparagine glycan. Residues Ala-101–Asp-111 carry the Conserved undecapeptide motif I motif. Positions Gly-118–Glu-124 match the Hepta-peptide GHRHDWE motif II motif.

Belongs to the Necrosis inducing protein (NPP1) family.

The protein resides in the secreted. Secreted effector that contributes moderately to virulence during infection by P.capsici. Does not cause visible reaction of C.annuum for several days after inoculation, but by 7 days after inoculation, small necrotic lesions become visible. Leads only to chlorotic areas, without necrosis at 7 days after non-host N.benthamiana leaves infection. This chain is NLP effector protein 10, found in Phytophthora capsici.